A 156-amino-acid polypeptide reads, in one-letter code: Large ribosomal subunit protein uL15 (156 aa).

The segment covering 1–16 (MVRRFKRAVKYRRGSR) has biased composition (basic residues). A disordered region spans residues 1 to 35 (MVRRFKRAVKYRRGSRTHGWGRVGQHRKSGGSGGK).

The protein belongs to the universal ribosomal protein uL15 family. In terms of assembly, part of the 50S ribosomal subunit.

Its function is as follows. Binds to the 23S rRNA. The polypeptide is Large ribosomal subunit protein uL15 (Pyrobaculum neutrophilum (strain DSM 2338 / JCM 9278 / NBRC 100436 / V24Sta) (Thermoproteus neutrophilus)).